A 231-amino-acid polypeptide reads, in one-letter code: Cuticlin 2 (231 aa).

Positions 1–16 are cleaved as a signal peptide; sequence MQKLIVFFTTIAAAQA. 12 consecutive repeat copies span residues 75 to 78, 79 to 82, 90 to 93, 105 to 108, 114 to 117, 121 to 124, 137 to 140, 153 to 156, 169 to 172, 192 to 195, 208 to 211, and 218 to 221. The 12 X 4 AA repeats of A-A-P-[AVI] stretch occupies residues 75–221; that stretch reads AAPIAAPAGG…AGGYQAAAPA (147 aa).

In terms of processing, tyrosine residues can be cross-linked in vitro, leading to the formation of insoluble high molecular-weight complexes.

It localises to the secreted. Functionally, component of the insoluble part of the cuticles. The polypeptide is Cuticlin 2 (Caenorhabditis elegans).